A 409-amino-acid polypeptide reads, in one-letter code: Aspartate aminotransferase, cytoplasmic (409 aa).

Ser-2 carries the N-acetylserine modification. 3 residues coordinate L-aspartate: Gly-38, Trp-138, and Asn-191. Lys-255 is subject to N6-(pyridoxal phosphate)lysine. Arg-383 provides a ligand contact to L-aspartate. Phosphoserine is present on Ser-385.

It belongs to the class-I pyridoxal-phosphate-dependent aminotransferase family. In terms of assembly, homodimer. Pyridoxal 5'-phosphate serves as cofactor.

The protein localises to the cytoplasm. It carries out the reaction L-aspartate + 2-oxoglutarate = oxaloacetate + L-glutamate. In terms of biological role, plays a key role in amino acid metabolism. In Schizosaccharomyces pombe (strain 972 / ATCC 24843) (Fission yeast), this protein is Aspartate aminotransferase, cytoplasmic.